Consider the following 289-residue polypeptide: Early E1A protein (289 aa).

The segment at 41–49 (PTLHELYDL) is interaction with RB1 in competition with E2F1. The interaction with UBE2I stretch occupies residues 76 to 140 (EGIDLLTFPP…PSDDEDEEGE (65 aa)). Positions 82–107 (TFPPAPGSPEPPHLSRQPEQPEQRAL) are disordered. The segment covering 84 to 93 (PPAPGSPEPP) has biased composition (pro residues). S89 bears the Phosphoserine; by host mark. A PXLXP motif, interaction with host ZMYND11 motif is present at residues 113 to 117 (PNLVP). Positions 122 to 126 (LTCHE) match the LXCXE motif, interaction with host RB1 and TMEM173/STING motif. A zinc finger lies at 154–174 (CRSCHYHRRNTGDPDIMCSLC). Positions 186 to 240 (PVSEPEPEPEPEPEPARPTRRPKMAPAILRRPTSPVSRECNSSTDSCDSGPSNTP) are disordered. Phosphoserine; by host occurs at positions 219 and 231. Residues 219–237 (SPVSRECNSSTDSCDSGPS) are compositionally biased toward polar residues. The short motif at 258–289 (RVGGRRQAVECIEDLLNEPGQPLDLSCKRPRP) is the Bipartite nuclear localization signal element. The PXDLS motif, CTBP-binding signature appears at 279-283 (PLDLS).

This sequence belongs to the adenoviridae E1A protein family. As to quaternary structure, interacts with host UBE2I; this interaction interferes with polySUMOylation. Interacts with host RB1; this interaction induces the aberrant dissociation of RB1-E2F1 complex thereby disrupting the activity of RB1 and activating E2F1-regulated genes. Interacts with host ATF7; the interaction enhances ATF7-mediated viral transactivation activity which requires the zinc binding domains of both proteins. Isoform early E1A 32 kDa protein and isoform early E1A 26 kDa protein interact (via N-terminus) with CUL1 and E3 ubiquitin ligase RBX1; these interactions inhibit RBX1-CUL1-dependent elongation reaction of ubiquitin chains and attenuate ubiquitination of SCF(FBXW7) target proteins. Interacts (via PXLXP motif) with host ZMYND11/BS69 (via MYND-type zinc finger); this interaction inhibits E1A mediated transactivation. Interacts with host EP300; this interaction stimulates the acetylation of RB1 by recruiting EP300 and RB1 into a multimeric-protein complex. Interacts with host CTBP1 and CTBP2; this interaction seems to potentiate viral replication. Interacts with host DCAF7 (ref.16). Interacts with host DYRK1A. Interacts with host KPNA4; this interaction allows E1A import into the host nucleus. Interacts with host EP400; this interaction stabilizes MYC. Interacts with host TBP protein; this interaction probably disrupts the TBP-TATA complex. Interacts (via LXCXE motif) with host TMEM173/STING; this interaction impairs the ability of TMEM173/STING to sense cytosolic DNA and promote the production of type I interferon (IFN-alpha and IFN-beta). Interacts (via C-terminus) with host ZBED1/hDREF (via C-terminus); the interaction is direct.

It localises to the host nucleus. In terms of biological role, plays a role in viral genome replication by driving entry of quiescent cells into the cell cycle. Stimulation of progression from G1 to S phase allows the virus to efficiently use the cellular DNA replicating machinery to achieve viral genome replication. E1A protein has both transforming and trans-activating activities. Induces the disassembly of the E2F1 transcription factor from RB1 by direct competition for the same binding site on RB1, with subsequent transcriptional activation of E2F1-regulated S-phase genes and of the E2 region of the adenoviral genome. Release of E2F1 leads to the ARF-mediated inhibition of MDM2 and causes TP53/p53 to accumulate because it is not targeted for degradation by MDM2-mediated ubiquitination anymore. This increase in TP53, in turn, would arrest the cell proliferation and direct its death but this effect is counteracted by the viral protein E1B-55K. Inactivation of the ability of RB1 to arrest the cell cycle is critical for cellular transformation, uncontrolled cellular growth and proliferation induced by viral infection. Interaction with RBX1 and CUL1 inhibits ubiquitination of the proteins targeted by SCF(FBXW7) ubiquitin ligase complex, and may be linked to unregulated host cell proliferation. The tumorigenesis-restraining activity of E1A may be related to the disruption of the host CtBP-CtIP complex through the CtBP binding motif. Interaction with host TMEM173/STING impairs the ability of TMEM173/STING to sense cytosolic DNA and promote the production of type I interferon (IFN-alpha and IFN-beta). Promotes the sumoylation of host ZBED1/hDREF with SUMO1. The protein is Early E1A protein of Homo sapiens (Human).